Here is a 152-residue protein sequence, read N- to C-terminus: Calmodulin-like protein 2 (152 aa).

4 EF-hand domains span residues 1 to 36 (MDRGELSRVFQMFDKNGDGKIAKNELKDFFKSVGIM), 37 to 72 (VPENEINEMIAKMDVNGDGAMDIDEFGSLYQEMVEE), 74 to 109 (EEEEDMREAFRVFDQNGDGFITDEELRSVLASMGLK), and 112 to 147 (RTLEDCKKMISKVDVDGDGMVNFKEFKQMMRGGGFA). Ca(2+) contacts are provided by aspartate 14, asparagine 16, aspartate 18, lysine 20, glutamate 25, aspartate 50, asparagine 52, aspartate 54, glutamate 61, aspartate 87, asparagine 89, aspartate 91, glutamate 98, aspartate 125, aspartate 127, aspartate 129, methionine 131, and glutamate 136.

The protein belongs to the calmodulin family.

In terms of biological role, potential calcium sensor that is required for pollen tube attraction for ovule fertilization. In Arabidopsis thaliana (Mouse-ear cress), this protein is Calmodulin-like protein 2 (CML2).